The sequence spans 556 residues: MKSDVEIAQAATMQPIHKIAEKLGLNADQIEQYGKYKAKINPTDAFKLPAKNGKLILVTAINPTPAGEGKTTVTIGLTDALNQLGKNAVVAAREPSLGPVFGVKGGAAGGGYAQVLPMEDINLHFTGDFHAITSANNLLAALLDNHIYQGNALNIDTKRVLWRRVIDMNDRQLRNVLGGLGNPTDGVIRPDGFDITVASEVMAIFCLAKDLADLKTRLGNILVAYTKDKQPVYAKDLNAHGAMAALLKDAIKPNLVQTIEGSPAFIHGGPFANIAHGCNSVTATRLALHLGDYAVTEAGFGADLGAEKFCDIKCRLADLKPDVAVVVATVKALKYNGGVEKANLAEENLTALQQGLPNLLKHISNLKNVFGLPVVVALNRFVSDTDAELALIQTACAKQGVEVSLTEVWGKGGAGGVDLAQKVLKAIDEQENRFNFVYDVNESVQNKIKAIAQKIYGADDVNFSAEALAEIKNLEKLGLDKLPICMAKTQYSLSDNAKLLGCPSGFTVTVRSISVSAGAGFIVAICGSIMRMPGLPKVPAANRIDVDENGLITGLF.

64 to 71 (TPAGEGKT) contacts ATP.

It belongs to the formate--tetrahydrofolate ligase family.

It carries out the reaction (6S)-5,6,7,8-tetrahydrofolate + formate + ATP = (6R)-10-formyltetrahydrofolate + ADP + phosphate. It participates in one-carbon metabolism; tetrahydrofolate interconversion. The protein is Formate--tetrahydrofolate ligase of Actinobacillus pleuropneumoniae serotype 5b (strain L20).